The chain runs to 108 residues: UPF0060 membrane protein sll0793 (108 aa).

A run of 4 helical transmembrane segments spans residues 7–27 (LYFV…WLWI), 32–52 (SVWL…VATL), 64–84 (YGGI…NVVV), and 86–106 (RLDW…MYAN).

This sequence belongs to the UPF0060 family.

The protein localises to the cell inner membrane. The sequence is that of UPF0060 membrane protein sll0793 from Synechocystis sp. (strain ATCC 27184 / PCC 6803 / Kazusa).